The chain runs to 189 residues: Interferon alpha-1 (189 aa).

The signal sequence occupies residues 1 to 23 (MAPTSAFLTALVLLSCNAICSLG). 2 disulfide bridges follow: C24–C122 and C52–C162.

This sequence belongs to the alpha/beta interferon family. Interacts with CR2.

It is found in the secreted. Its function is as follows. Produced by macrophages, IFN-alpha have antiviral activities. Interferon stimulates the production of two enzymes: a protein kinase and an oligoadenylate synthetase. The sequence is that of Interferon alpha-1 from Sus scrofa (Pig).